Reading from the N-terminus, the 165-residue chain is Lipoprotein signal peptidase (165 aa).

3 consecutive transmembrane segments (helical) span residues 9–29, 69–89, and 98–118; these read FLAIACFVLIDWVTKLAVLLY, KYFLFFIRITIILGILAFLFL, and IRFSLILLCSGAIGNVGDIVF. Catalysis depends on residues Asp-124 and Asp-142. A helical transmembrane segment spans residues 133–153; that stretch reads WFFPTFNFADIFISLGTLIFI.

This sequence belongs to the peptidase A8 family.

The protein resides in the cell inner membrane. The enzyme catalyses Release of signal peptides from bacterial membrane prolipoproteins. Hydrolyzes -Xaa-Yaa-Zaa-|-(S,diacylglyceryl)Cys-, in which Xaa is hydrophobic (preferably Leu), and Yaa (Ala or Ser) and Zaa (Gly or Ala) have small, neutral side chains.. It functions in the pathway protein modification; lipoprotein biosynthesis (signal peptide cleavage). Functionally, this protein specifically catalyzes the removal of signal peptides from prolipoproteins. The protein is Lipoprotein signal peptidase of Chlamydia abortus (strain DSM 27085 / S26/3) (Chlamydophila abortus).